Consider the following 457-residue polypeptide: Multidrug resistance protein MdtK (457 aa).

12 helical membrane passes run 11–31 (LLAL…MGFV), 53–73 (IWLP…PVIA), 93–113 (WLAG…GYII), 127–147 (AVGY…FQVA), 160–180 (GMVM…IFIY), 189–209 (GGVG…LAMV), 243–263 (LPIA…ALLV), 276–296 (IALN…AAVT), 314–334 (AART…IFTV), 350–370 (VVTL…SDSI), 387–407 (IFYI…YILA), and 418–438 (PAGF…MMML).

The protein belongs to the multi antimicrobial extrusion (MATE) (TC 2.A.66.1) family. MdtK subfamily.

It is found in the cell inner membrane. Functionally, multidrug efflux pump that functions probably as a Na(+)/drug antiporter. The polypeptide is Multidrug resistance protein MdtK (Escherichia coli O127:H6 (strain E2348/69 / EPEC)).